The chain runs to 102 residues: NADH-quinone oxidoreductase subunit K (102 aa).

3 consecutive transmembrane segments (helical) span residues 6–26, 30–50, and 62–82; these read LEHGLIVATILFALGFYGVMV, LLFMLMSLEIMMNAAALAFVL, and IMFILILTLAAAEACIGLAIV.

It belongs to the complex I subunit 4L family. As to quaternary structure, NDH-1 is composed of 14 different subunits. Subunits NuoA, H, J, K, L, M, N constitute the membrane sector of the complex.

The protein localises to the cell inner membrane. It catalyses the reaction a quinone + NADH + 5 H(+)(in) = a quinol + NAD(+) + 4 H(+)(out). NDH-1 shuttles electrons from NADH, via FMN and iron-sulfur (Fe-S) centers, to quinones in the respiratory chain. The immediate electron acceptor for the enzyme in this species is believed to be ubiquinone. Couples the redox reaction to proton translocation (for every two electrons transferred, four hydrogen ions are translocated across the cytoplasmic membrane), and thus conserves the redox energy in a proton gradient. The polypeptide is NADH-quinone oxidoreductase subunit K (Acinetobacter baylyi (strain ATCC 33305 / BD413 / ADP1)).